Here is a 305-residue protein sequence, read N- to C-terminus: Imidazoleglycerol-phosphate dehydratase (305 aa).

This sequence belongs to the imidazoleglycerol-phosphate dehydratase family.

It is found in the cytoplasm. It carries out the reaction D-erythro-1-(imidazol-4-yl)glycerol 3-phosphate = 3-(imidazol-4-yl)-2-oxopropyl phosphate + H2O. Its pathway is amino-acid biosynthesis; L-histidine biosynthesis; L-histidine from 5-phospho-alpha-D-ribose 1-diphosphate: step 6/9. The protein is Imidazoleglycerol-phosphate dehydratase of Neisseria meningitidis serogroup C (strain 053442).